Here is a 118-residue protein sequence, read N- to C-terminus: Large ribosomal subunit protein bL20 (118 aa).

This sequence belongs to the bacterial ribosomal protein bL20 family.

Its function is as follows. Binds directly to 23S ribosomal RNA and is necessary for the in vitro assembly process of the 50S ribosomal subunit. It is not involved in the protein synthesizing functions of that subunit. The chain is Large ribosomal subunit protein bL20 from Psychromonas ingrahamii (strain DSM 17664 / CCUG 51855 / 37).